The following is a 144-amino-acid chain: uncharacterized protein (144 aa).

Positions 1-24 (MGKVIQFPFGEEPEKKEEKELKTE) are disordered. Residues 12–24 (EPEKKEEKELKTE) show a composition bias toward basic and acidic residues.

This is an uncharacterized protein from Aquifex aeolicus (strain VF5).